Reading from the N-terminus, the 254-residue chain is uncharacterized protein (254 aa).

In terms of domain architecture, S4 RNA-binding spans 14–81; the sequence is IRLQKVLSQA…DSLVYLALNK (68 aa). Aspartate 119 functions as the Nucleophile in the catalytic mechanism.

This sequence belongs to the pseudouridine synthase RsuA family.

It catalyses the reaction a uridine in RNA = a pseudouridine in RNA. This is an uncharacterized protein from Mycobacterium bovis (strain ATCC BAA-935 / AF2122/97).